A 337-amino-acid polypeptide reads, in one-letter code: MEDFSLDGNHGHVPVMRDRMAALIAENVEALGENAVIVDATLGAGGHAEFFLNTFPKARLIGLDRDQNALRDARARLAPFGERFIGVQTRFDGLREVLESVEGDIIDLAREHGIAGALFDLGVSSMQLDQVERGFAYRTDAPLDMRMDATQGITAADILNTYSHGDIARILKTYGDERFAGKIASAVLKEREKEPFTTSARLVELLYDAIPAATRRTGGHPAKRTFQALRVEVNNELDSLKNVLPQITDALNVGGRAVFMSYQSHEDKLVKKFFTDLTTSKTPPGLPVDLPGTAPQFKQVTRGAETASEAEIEENPRAAPVKVRAIERIANNSGDLS.

Residues Gly-45–His-47, Asp-64, Phe-91, Asp-120, and Gln-127 contribute to the S-adenosyl-L-methionine site.

It belongs to the methyltransferase superfamily. RsmH family.

It is found in the cytoplasm. The enzyme catalyses cytidine(1402) in 16S rRNA + S-adenosyl-L-methionine = N(4)-methylcytidine(1402) in 16S rRNA + S-adenosyl-L-homocysteine + H(+). In terms of biological role, specifically methylates the N4 position of cytidine in position 1402 (C1402) of 16S rRNA. In Corynebacterium glutamicum (strain R), this protein is Ribosomal RNA small subunit methyltransferase H.